The primary structure comprises 427 residues: 3-phosphoshikimate 1-carboxyvinyltransferase (427 aa).

Positions 20, 21, and 25 each coordinate 3-phosphoshikimate. Lys20 lines the phosphoenolpyruvate pocket. Phosphoenolpyruvate contacts are provided by Gly92 and Arg120. 4 residues coordinate 3-phosphoshikimate: Ser166, Gln168, Asp312, and Lys339. Residue Gln168 coordinates phosphoenolpyruvate. The Proton acceptor role is filled by Asp312. 2 residues coordinate phosphoenolpyruvate: Arg343 and Arg385.

This sequence belongs to the EPSP synthase family. In terms of assembly, monomer.

It is found in the cytoplasm. It carries out the reaction 3-phosphoshikimate + phosphoenolpyruvate = 5-O-(1-carboxyvinyl)-3-phosphoshikimate + phosphate. It functions in the pathway metabolic intermediate biosynthesis; chorismate biosynthesis; chorismate from D-erythrose 4-phosphate and phosphoenolpyruvate: step 6/7. Its function is as follows. Catalyzes the transfer of the enolpyruvyl moiety of phosphoenolpyruvate (PEP) to the 5-hydroxyl of shikimate-3-phosphate (S3P) to produce enolpyruvyl shikimate-3-phosphate and inorganic phosphate. This is 3-phosphoshikimate 1-carboxyvinyltransferase from Streptococcus pneumoniae (strain Hungary19A-6).